The following is a 434-amino-acid chain: UDP-N-acetylmuramoylalanine--D-glutamate ligase (434 aa).

Position 113–119 (113–119 (GSNGKST)) interacts with ATP.

It belongs to the MurCDEF family.

The protein localises to the cytoplasm. The enzyme catalyses UDP-N-acetyl-alpha-D-muramoyl-L-alanine + D-glutamate + ATP = UDP-N-acetyl-alpha-D-muramoyl-L-alanyl-D-glutamate + ADP + phosphate + H(+). It functions in the pathway cell wall biogenesis; peptidoglycan biosynthesis. In terms of biological role, cell wall formation. Catalyzes the addition of glutamate to the nucleotide precursor UDP-N-acetylmuramoyl-L-alanine (UMA). This Pasteurella multocida (strain Pm70) protein is UDP-N-acetylmuramoylalanine--D-glutamate ligase.